Reading from the N-terminus, the 315-residue chain is Ribose-phosphate pyrophosphokinase (315 aa).

Residues 41–43 (DGE) and 100–101 (RQ) contribute to the ATP site. Positions 134 and 173 each coordinate Mg(2+). K196 is an active-site residue. D-ribose 5-phosphate is bound by residues R198, D222, and 226–230 (DTAGT).

This sequence belongs to the ribose-phosphate pyrophosphokinase family. Class I subfamily. Homohexamer. Mg(2+) serves as cofactor.

It localises to the cytoplasm. It catalyses the reaction D-ribose 5-phosphate + ATP = 5-phospho-alpha-D-ribose 1-diphosphate + AMP + H(+). It functions in the pathway metabolic intermediate biosynthesis; 5-phospho-alpha-D-ribose 1-diphosphate biosynthesis; 5-phospho-alpha-D-ribose 1-diphosphate from D-ribose 5-phosphate (route I): step 1/1. Its function is as follows. Involved in the biosynthesis of the central metabolite phospho-alpha-D-ribosyl-1-pyrophosphate (PRPP) via the transfer of pyrophosphoryl group from ATP to 1-hydroxyl of ribose-5-phosphate (Rib-5-P). The protein is Ribose-phosphate pyrophosphokinase of Bacillus caldolyticus.